The primary structure comprises 417 residues: NADH-quinone oxidoreductase subunit D (417 aa).

It belongs to the complex I 49 kDa subunit family. As to quaternary structure, NDH-1 is composed of 14 different subunits. Subunits NuoB, C, D, E, F, and G constitute the peripheral sector of the complex.

It localises to the cell inner membrane. It catalyses the reaction a quinone + NADH + 5 H(+)(in) = a quinol + NAD(+) + 4 H(+)(out). Its function is as follows. NDH-1 shuttles electrons from NADH, via FMN and iron-sulfur (Fe-S) centers, to quinones in the respiratory chain. The immediate electron acceptor for the enzyme in this species is believed to be ubiquinone. Couples the redox reaction to proton translocation (for every two electrons transferred, four hydrogen ions are translocated across the cytoplasmic membrane), and thus conserves the redox energy in a proton gradient. The chain is NADH-quinone oxidoreductase subunit D from Paraburkholderia xenovorans (strain LB400).